The following is a 453-amino-acid chain: Chromosomal replication initiator protein DnaA (453 aa).

Positions 1-74 (MKEKQFWNRI…GFEIYDAEIT (74 aa)) are domain I, interacts with DnaA modulators. The tract at residues 74 to 113 (TPHYIFTKPQDTTSSQVEEATNLTLYDYSPKLVSIPYSDT) is domain II. The interval 114-331 (GLKEKYTFDN…GAINDITLIA (218 aa)) is domain III, AAA+ region. ATP-binding residues include Gly-158, Gly-160, Lys-161, and Thr-162. The tract at residues 332-453 (RVKKIKDITI…EIESIKKKIK (122 aa)) is domain IV, binds dsDNA.

It belongs to the DnaA family. Oligomerizes as a right-handed, spiral filament on DNA at oriC. Interacts (via domains I and III) with CcrZ.

Its subcellular location is the cytoplasm. With respect to regulation, ccrZ stimulates DnaA, possibly by phosphorylation of an intermediate molecule, to initiate DNA replication. Its function is as follows. Plays an essential role in the initiation and regulation of chromosomal replication. ATP-DnaA binds to the origin of replication (oriC) to initiate formation of the DNA replication initiation complex once per cell cycle. Binds the DnaA box (a 9 base pair repeat at the origin) and separates the double-stranded (ds)DNA. Forms a right-handed helical filament on oriC DNA; dsDNA binds to the exterior of the filament while single-stranded (ss)DNA is stabiized in the filament's interior. The ATP-DnaA-oriC complex binds and stabilizes one strand of the AT-rich DNA unwinding element (DUE), permitting loading of DNA polymerase. After initiation quickly degrades to an ADP-DnaA complex that is not apt for DNA replication. Binds acidic phospholipids. Mutations in this gene suppress a deletion of cell cycle regulator ccrZ. In Streptococcus pneumoniae serotype 2 (strain D39 / NCTC 7466), this protein is Chromosomal replication initiator protein DnaA.